The primary structure comprises 620 residues: Notoamide biosynthesis transcriptional activator notL' (620 aa).

The tract at residues 1–26 (MPPSSKSRRLPPAASDSAASDAQKRR) is disordered. Residues 33–59 (CSACKARKLKCTGAPPCANCVKSRIEC) constitute a DNA-binding region (zn(2)-C6 fungal-type). Residues 591 to 620 (ETGAFFLDPDQPSGNSTPIKSETPEGTAIS) form a disordered region.

The protein localises to the nucleus. In terms of biological role, transcription factor that probably regulates the expression of the gene cluster that mediates the biosynthesis of notoamide, a fungal indole alkaloid that belongs to a family of natural products containing a characteristic bicyclo[2.2.2]diazaoctane core. The protein is Notoamide biosynthesis transcriptional activator notL' of Aspergillus versicolor.